Reading from the N-terminus, the 74-residue chain is MLEGAKSIGAGAATIASAGAAVGIGNVFSSLIHSVARNPSLAKQLFGYAILGFALTEAIALFALMMAFLILFVF.

2 consecutive transmembrane segments (helical) span residues Ile-8–Phe-28 and Leu-45–Phe-72.

This sequence belongs to the ATPase C chain family. As to quaternary structure, F-type ATPases have 2 components, CF(1) - the catalytic core - and CF(0) - the membrane proton channel. CF(1) has five subunits: alpha(3), beta(3), gamma(1), delta(1), epsilon(1). CF(0) has three main subunits: a, b and c.

The protein resides in the mitochondrion membrane. Its function is as follows. This protein is one of the chains of the nonenzymatic membrane component (F0) of mitochondrial ATPase. The sequence is that of ATP synthase subunit 9, mitochondrial (ATP9) from Pisum sativum (Garden pea).